The chain runs to 370 residues: Phenylalanine dehydrogenase (370 aa).

Arginine 44 lines the NAD(+) pocket. Lysine 68 is a binding site for L-phenylalanine. Lysine 80 acts as the Proton donor/acceptor in catalysis. Position 114-115 (114-115 (TD)) interacts with L-phenylalanine. NAD(+) contacts are provided by residues aspartate 115, serine 146, threonine 150, 180-186 (GLGKVGF), 203-204 (DV), 243-244 (AI), and 264-266 (AAN). Asparagine 266 contributes to the L-phenylalanine binding site.

This sequence belongs to the Glu/Leu/Phe/Val dehydrogenases family.

The enzyme catalyses L-phenylalanine + NAD(+) + H2O = 3-phenylpyruvate + NH4(+) + NADH + H(+). Its pathway is amino-acid biosynthesis; L-phenylalanine biosynthesis; L-phenylalanine from phenylpyruvate (PDH route): step 1/1. Its function is as follows. Catalyzes the reversible NAD(+)-dependent oxidative deamination of L-phenylalanine to phenylpyruvate. The protein is Phenylalanine dehydrogenase of Caldalkalibacillus thermarum (strain TA2.A1).